Reading from the N-terminus, the 313-residue chain is tRNA dimethylallyltransferase (313 aa).

11 to 18 (GPTACGKT) is an ATP binding site. Residue 13-18 (TACGKT) coordinates substrate. Interaction with substrate tRNA stretches follow at residues 36-39 (DSAL), 160-164 (QRIGR), and 243-248 (RCVGYR).

Belongs to the IPP transferase family. As to quaternary structure, monomer. The cofactor is Mg(2+).

The enzyme catalyses adenosine(37) in tRNA + dimethylallyl diphosphate = N(6)-dimethylallyladenosine(37) in tRNA + diphosphate. Catalyzes the transfer of a dimethylallyl group onto the adenine at position 37 in tRNAs that read codons beginning with uridine, leading to the formation of N6-(dimethylallyl)adenosine (i(6)A). This Neisseria gonorrhoeae (strain ATCC 700825 / FA 1090) protein is tRNA dimethylallyltransferase.